A 331-amino-acid polypeptide reads, in one-letter code: UPF0194 membrane protein CKO_02332 (331 aa).

Positions methionine 1–alanine 15 are cleaved as a signal peptide. The stretch at isoleucine 142–isoleucine 207 forms a coiled coil.

This sequence belongs to the UPF0194 family.

The protein resides in the periplasm. The polypeptide is UPF0194 membrane protein CKO_02332 (Citrobacter koseri (strain ATCC BAA-895 / CDC 4225-83 / SGSC4696)).